The following is a 555-amino-acid chain: MARVEL domain-containing protein 2 (555 aa).

Residues 1–20 are compositionally biased toward basic and acidic residues; the sequence is MSSSDARSRIRDRGYSEVPR. The tract at residues 1 to 71 is disordered; the sequence is MSSSDARSRI…FYSSDTEEPA (71 aa). Topologically, residues 1 to 191 are cytoplasmic; it reads MSSSDARSRI…YMKSWAGLLR (191 aa). Residues 46–59 are compositionally biased toward pro residues; the sequence is PLPPPPLPLQPPFG. 3 positions are modified to phosphoserine: S117, S121, and S158. The segment at 118–142 is disordered; that stretch reads PPASPARANHHPYKDPSRGSQGTFN. T163 bears the Phosphothreonine mark. In terms of domain architecture, MARVEL spans 185 to 364; the sequence is SWAGLLRILG…SALVCLKLWR (180 aa). Residues 192–212 traverse the membrane as a helical segment; it reads ILGVVELLLGAGVFACVTAYI. Residues 213-251 are Extracellular-facing; it reads HKDNEWYNLFGYTQPYGMGGLGSLGNTYGGYYYSGPKTP. A helical membrane pass occupies residues 252 to 272; sequence FVLVVAGLAWITTIIILVLGM. Residues 273–288 are Cytoplasmic-facing; the sequence is SMYYRTILLDSNWWPL. Residues 289-309 form a helical membrane-spanning segment; that stretch reads TEFGVNVALFILYMAAAIVYV. Residues 310–338 are Extracellular-facing; that stretch reads NDTNRGGLCYYPLFNTPMNAMFCRVEGGQ. The helical transmembrane segment at 339-359 threads the bilayer; that stretch reads IAAMIFLFVTMIVYLVSALVC. The Cytoplasmic segment spans residues 360–555; it reads LKLWRHEAAR…VMNWDTQGYP (196 aa). S384 bears the Phosphoserine mark. K408 is covalently cross-linked (Glycyl lysine isopeptide (Lys-Gly) (interchain with G-Cter in ubiquitin)). Residues 437–548 form the OCEL domain; that stretch reads PDYVAKYPVI…RIQEYDKVMN (112 aa). Residues 521 to 545 adopt a coiled-coil conformation; sequence EKKERCDYLKNKLSHIKQRIQEYDK.

Belongs to the ELL/occludin family. As to quaternary structure, interacts with TJP1. Interacts with the ubiquitin ligase ITCH. Interacts (via C-terminal cytoplasmic domain) with LSR (via the cytoplasmic domain), ILDR1 and ILDR2; the interaction is required to recruit MARVELD2 to tricellular contacts. In terms of processing, ubiquitinated by ITCH; but this ubiquitination does not lead to proteasomal degradation. Polyubiquitinated at Lys-408 via 'Lys-63'-linked ubiquitin chains; deubiquitinated by USP53. Post-translationally, phosphorylated. Detected in small intestine, stomach and kidney, in epithelial cells. Detected in pancreas, retina and lung, and in stria vascularis, utricle and the organ of Conti in the inner ear (at protein level). Predominantly detected in small intestine, lung and kidney, with lower levels in liver, testis and brain. In colon, expressed in the entire crypts.

The protein resides in the cell membrane. The protein localises to the cell junction. It is found in the tight junction. Its function is as follows. Plays a role in the formation of tricellular tight junctions and of epithelial barriers. Required for normal hearing via its role in the separation of the endolymphatic and perilymphatic spaces of the organ of Corti in the inner ear, and for normal survival of hair cells in the organ of Corti. This Mus musculus (Mouse) protein is MARVEL domain-containing protein 2.